Consider the following 579-residue polypeptide: Cytochrome P450 monooxygenase ORF6 (579 aa).

Asn2 is a glycosylation site (N-linked (GlcNAc...) asparagine). Residues 7-29 (PLGSFVGTTLLLFILYKLVKLAY) traverse the membrane as a helical segment. Asn194 and Asn390 each carry an N-linked (GlcNAc...) asparagine glycan. Cys512 contacts heme.

It belongs to the cytochrome P450 family. Requires heme as cofactor.

It is found in the membrane. It functions in the pathway sesquiterpene biosynthesis. Cytochrome P450 monooxygenase; part of the gene cluster that mediates the biosynthesis of PR-toxin, a bicyclic sesquiterpene belonging to the eremophilane class and acting as a mycotoxin. The first step of the pathway is catalyzed by the aristolochene synthase which performs the cyclization of trans,trans-farnesyl diphosphate (FPP) to the bicyclic sesquiterpene aristolochene. Following the formation of aristolochene, the non-oxygenated aristolochene is converted to the trioxygenated intermediate eremofortin B, via 7-epi-neopetasone. This conversion appears to involve three enzymes, a hydroxysterol oxidase-like enzyme, the quinone-oxidase prx3 that forms the quinone-type-structure in the bicyclic nucleus of aristolochene with the C8-oxo group and the C-3 hydroxyl group, and the P450 monooxygenase ORF6 that introduces the epoxide at the double bond between carbons 1 and 2. No monoxy or dioxy-intermediates have been reported to be released to the broth, so these three early oxidative reactions may be coupled together. Eremofortin B is further oxidized by another P450 monooxygenase, that introduces a second epoxide between carbons 7 and 11 prior to acetylation to eremofortin A by the acetyltransferase ORF8. The second epoxidation may be performed by a second P450 monooxygenase. After the acetylation step, eremofortin A is converted to eremofortin C and then to PR-toxin. First the conversion of eremofortin A to eremofortin C proceeds by oxidation of the side chain of the molecule at C-12 and is catalyzed by the short-chain oxidoreductase prx1. The cytochrome P450 monooxygenase ORF6 is probably also involved in this step. The primary alcohol formed at C-12 is finally oxidized by the short-chain alcohol dehydrogenase prx4 that forms PR-toxin. The chain is Cytochrome P450 monooxygenase ORF6 from Penicillium roqueforti (strain FM164).